Here is a 1169-residue protein sequence, read N- to C-terminus: MKSMIANYISEDNRFQELDEVFGQENILVTGLSPSAKATIIAEKYLKDHKQMLLVTNNLYQADKIETDILQYVDDSEVYKYPVQDIMTEEFSTQSPQLMSERVRTLTALAQGEKGLFIVPLNGFKKWLTPVDLWKDHQMTLKVGQDIDVDAFLNKLVNMGYRRESVVSHIGEFSLRGGIIDIYPLIGTPVRIELFDTEVDSIRDFDVETQRSNDNINQVEITTASDYIITDEVIQHLQNELKKAYEYTRPKIEKSVRNDLKETYESFKLFESTFFDHQLLRRLVSFMYEKPSTLIDYFQKNAIIVVDEFNRIKETEETLTTEVEDFMSNLIESGNGFIGQGFMKYESFDALLEQHAVAYFTLFTSSMQVPLQHIIKFSCKPVQQFYGQYDIMRSEFQRYVHQDYTVVVLVETETKVERIQSMLNEMHIPTVSNIHEDIDGGQVVVTEGSLSEGFELPYMQLVVITERELFKTRQKKQRKRTKTISNAEKIKSYQDLNVGDYIVHVHHGVGRYLGVETLEVGDTHRDYIKLQYKGTDQLFVPVDQMDQVQKYVASEDKSPRLNKLGGTEWKKTKAKVQQSVEDIADELIDLYKEREMSVGYQYGQDTAEQSAFEHDFPYELTPDQSKSIDEIKGDMERARPMDRLLCGDVGYGKTEVAVRAAFKAVMDGKQVAFLVPTTILAQQHYETLLERMQDFPVEIQLVSRFRTAKEIRETKEGLKSGYVDIVVGTHKLLGKDIQYKDLGLLIVDEEQRFGVRHKERIKTLKKNVDVLTLTATPIPRTLHMSMLGVRDLSVIETPPENRFPVQTYVLEQNTNFIKEALERELSRDGQVFYLYNKVQSIYEKREQLQRLMPDANIAVAHGQMTERDLEETMLSFINHEYDILVTTTIIETGVDVPNANTLIIEEADRFGLSQLYQLRGRVGRSSRIGYAYFLHPANKVLNETAEERLQTIKEFTELGSGFKIAMRDLNIRGAGNLLGKQQHGFIDSVGFDLYSQMLEEAVNEKRGIKEESPDAPDIEVELHLDAYLPAEYIQSEQAKIEIYKKLRKVETEEQLFDVKDELIDRFNDYPIEVERLLDIVEIKVHALHAGVELIKDKGKSIQIILSPKATEDINGEELFKQTQPLGRAMKVGVQNNAMNVTLTKSKQWLDSLKFLVRCIEESMAIKDED.

The 162-residue stretch at 634–795 (DMERARPMDR…MLGVRDLSVI (162 aa)) folds into the Helicase ATP-binding domain. Position 647–654 (647–654 (GDVGYGKT)) interacts with ATP. The DEEQ box motif lies at 748–751 (DEEQ). Positions 809 to 970 (VLEQNTNFIK…GFKIAMRDLN (162 aa)) constitute a Helicase C-terminal domain.

This sequence in the N-terminal section; belongs to the UvrB family. The protein in the C-terminal section; belongs to the helicase family. RecG subfamily.

Its subcellular location is the cytoplasm. In terms of biological role, couples transcription and DNA repair by recognizing RNA polymerase (RNAP) stalled at DNA lesions. Mediates ATP-dependent release of RNAP and its truncated transcript from the DNA, and recruitment of nucleotide excision repair machinery to the damaged site. In Staphylococcus epidermidis (strain ATCC 12228 / FDA PCI 1200), this protein is Transcription-repair-coupling factor.